The chain runs to 203 residues: FMN-dependent NADH:quinone oxidoreductase 3 (203 aa).

FMN is bound by residues Ser9, 15–17 (SAS), 95–98 (MYNF), and 139–142 (TAGG).

It belongs to the azoreductase type 1 family. Homodimer. The cofactor is FMN.

The catalysed reaction is 2 a quinone + NADH + H(+) = 2 a 1,4-benzosemiquinone + NAD(+). The enzyme catalyses N,N-dimethyl-1,4-phenylenediamine + anthranilate + 2 NAD(+) = 2-(4-dimethylaminophenyl)diazenylbenzoate + 2 NADH + 2 H(+). In terms of biological role, quinone reductase that provides resistance to thiol-specific stress caused by electrophilic quinones. Functionally, also exhibits azoreductase activity. Catalyzes the reductive cleavage of the azo bond in aromatic azo compounds to the corresponding amines. The chain is FMN-dependent NADH:quinone oxidoreductase 3 from Pseudomonas fluorescens (strain Pf0-1).